The following is a 212-amino-acid chain: High frequency lysogenization protein HflD homolog (212 aa).

This sequence belongs to the HflD family.

The protein localises to the cytoplasm. Its subcellular location is the cell inner membrane. In Stutzerimonas stutzeri (strain A1501) (Pseudomonas stutzeri), this protein is High frequency lysogenization protein HflD homolog.